The sequence spans 551 residues: Genetic interactor of prohibitins 3, mitochondrial (551 aa).

The transit peptide at 1–24 (MFVVRRSIVFQQSRRQFSGSIAWL) directs the protein to the mitochondrion. The CP-type G domain maps to 118 to 299 (LKEVIRSVPN…IYDLPGYSEN (182 aa)).

This sequence belongs to the TRAFAC class YlqF/YawG GTPase family. GEP3 subfamily.

It localises to the mitochondrion. In terms of biological role, may be involved in the mitochondrial lipid metabolism. The sequence is that of Genetic interactor of prohibitins 3, mitochondrial (GEP3) from Vanderwaltozyma polyspora (strain ATCC 22028 / DSM 70294 / BCRC 21397 / CBS 2163 / NBRC 10782 / NRRL Y-8283 / UCD 57-17) (Kluyveromyces polysporus).